The chain runs to 160 residues: Transcriptional repressor NrdR (160 aa).

A zinc finger spans residues 3–34 (CPYCQYEDTQVKDSRPVEEGAVIRRRRVCPVC). One can recognise an ATP-cone domain in the interval 49–139 (LLVSKKSGRC…VYRDFRNASD (91 aa)).

The protein belongs to the NrdR family. Zn(2+) serves as cofactor.

In terms of biological role, negatively regulates transcription of bacterial ribonucleotide reductase nrd genes and operons by binding to NrdR-boxes. The chain is Transcriptional repressor NrdR from Bartonella quintana (strain Toulouse) (Rochalimaea quintana).